Here is a 1182-residue protein sequence, read N- to C-terminus: Rho GTPase-activating protein 20 (1182 aa).

The tract at residues 1–40 (MEAMSPQQDALGAQPGRSSSLTGMSRIAGGPGTKKKMKTL) is disordered. Ser-46 is modified (phosphoserine). The region spanning 86-187 (LLIDGPVELK…SLLQRYIALE (102 aa)) is the PH domain. Residues 194-283 (KSIPLKIFAK…TALLTQGSKD (90 aa)) enclose the Ras-associating domain. One can recognise a Rho-GAP domain in the interval 365–551 (VSLPDICEND…FLIENCCRIF (187 aa)). Residues Ser-704 and Ser-730 each carry the phosphoserine modification. 4 disordered regions span residues 744–791 (KQTQ…IQET), 932–953 (ASYSSLSSPGTSPSGSSVSSQD), 981–1009 (QRKQEELSSDCDSPSLVSGMPGPSTGQAS), and 1140–1182 (EESG…GDRH). The span at 757-775 (FKQSSVTGTDVSKRNTANE) shows a compositional bias: polar residues. Residues 933–953 (SYSSLSSPGTSPSGSSVSSQD) show a composition bias toward low complexity.

Highest expression is found in testis. Ubiquitously expressed in extragonadal tissues.

Functionally, GTPase activator for the Rho-type GTPases by converting them to an inactive GDP-bound state. The protein is Rho GTPase-activating protein 20 (Arhgap20) of Rattus norvegicus (Rat).